A 1327-amino-acid chain; its full sequence is ABC transporter 1 (1327 aa).

The next 6 helical transmembrane spans lie at 47-67 (LGIL…IIFG), 100-120 (VYVG…WNLF), 170-190 (KVGI…IAFV), 195-215 (LGGE…VGGY), 228-248 (VAGA…VHAF), and 276-296 (VAVQ…LAFW). An ABC transmembrane type-1 1 domain is found at 47–326 (LGILAAIASG…TTYTVIFLLV (280 aa)). 3 N-linked (GlcNAc...) asparagine glycosylation sites follow: Asn381, Asn390, and Asn406. Residues 386 to 663 (IELNNVSFAF…DGAYAGLVRL (278 aa)) form the ABC transporter 1 domain. 421 to 428 (GLSGSGKS) is an ATP binding site. N-linked (GlcNAc...) asparagine glycosylation is found at Asn463 and Asn674. The next 6 membrane-spanning stretches (helical) occupy residues 743-763 (FLAL…AVVF), 785-805 (FYGL…LGSW), 859-881 (LTGS…IALS), 888-910 (IALV…VITM), 971-991 (LWLA…YWWG), and 1005-1025 (FFIV…MFTL). The ABC transmembrane type-1 2 domain maps to 743 to 1031 (FLALTSAFVV…MFTLAPDVSR (289 aa)). Asn1050 carries an N-linked (GlcNAc...) asparagine glycan. The segment at 1054–1081 (PCQHLKPGNDLEANAEPREKRPDQSQGG) is disordered. One can recognise an ABC transporter 2 domain in the interval 1084 to 1323 (VSLNNVKFSY…SESYKINALH (240 aa)). 1119-1126 (GPSGAGKS) contacts ATP.

It belongs to the ABC transporter superfamily. ABCB family. Multidrug resistance exporter (TC 3.A.1.201) subfamily.

It is found in the membrane. Functionally, ABC transporter; part of the gene cluster that mediates the biosynthesis of hydroxamate-containing siderophores that play a critical role in virulence via intracellular iron acquisition during macrophage infection. Probably involved in the excretion of the extracellular siderophores. In Ajellomyces capsulatus (Darling's disease fungus), this protein is ABC transporter 1.